Consider the following 337-residue polypeptide: Large ribosomal subunit protein uL10 (337 aa).

Positions 309-337 (EEVVEEQEEVKEEEEEESDMASGLGALFG) are disordered. Positions 310-327 (EVVEEQEEVKEEEEEESD) are enriched in acidic residues.

The protein belongs to the universal ribosomal protein uL10 family. In terms of assembly, part of the 50S ribosomal subunit. Forms part of the ribosomal stalk which helps the ribosome interact with GTP-bound translation factors. Forms a heptameric L10(L12)2(L12)2(L12)2 complex, where L10 forms an elongated spine to which the L12 dimers bind in a sequential fashion.

Its function is as follows. Forms part of the ribosomal stalk, playing a central role in the interaction of the ribosome with GTP-bound translation factors. The chain is Large ribosomal subunit protein uL10 from Methanococcoides burtonii (strain DSM 6242 / NBRC 107633 / OCM 468 / ACE-M).